The following is a 413-amino-acid chain: MEKPNNTITDVLEGIVTEILVRLPLRSISRFKSVSQTWKSAIESVYFRRLFVSLHQNTSSSWSLLLRKEEFIDFHGCGTWGLPKSLGSYIQCMELDGKFEYMWFSGSNGLILMHRKLGTWKNYVGNPVLQQWVEIPACPGSYTFFCGVVTGVDEVGVVLSFKVVKSGNMFLNKGEMYMPLYVYSSETGFWIHKEVVCPVRLPNFYDPISLNGTLYFSQRGDSYNRRPGLMVLDFYGKPKDCHFIPLPDHALNRNKTCLATSSGFVMYIKTLAQPGGNLLKVWRLIDDSAWQLMWEVSIPFIGCYAPMSMHPFDRNIVYLWSHDNCYLMSFNLQTQNYKIFGDESKHHDCYINHRTCEKHMYKISRPYSVSEYEGPIILQQWVLSRWMQSVPRPPEVEMIDTTSLLSLVVKNEE.

An F-box domain is found at 5 to 54 (NNTITDVLEGIVTEILVRLPLRSISRFKSVSQTWKSAIESVYFRRLFVSL). The Kelch repeat unit spans residues 168–210 (NMFLNKGEMYMPLYVYSSETGFWIHKEVVCPVRLPNFYDPISL).

In Arabidopsis thaliana (Mouse-ear cress), this protein is Putative F-box/kelch-repeat protein At4g22430.